A 105-amino-acid chain; its full sequence is DNA-directed RNA polymerase subunit omega (105 aa).

Belongs to the RNA polymerase subunit omega family. The RNAP catalytic core consists of 2 alpha, 1 beta, 1 beta' and 1 omega subunit. When a sigma factor is associated with the core the holoenzyme is formed, which can initiate transcription.

The catalysed reaction is RNA(n) + a ribonucleoside 5'-triphosphate = RNA(n+1) + diphosphate. Functionally, promotes RNA polymerase assembly. Latches the N- and C-terminal regions of the beta' subunit thereby facilitating its interaction with the beta and alpha subunits. The sequence is that of DNA-directed RNA polymerase subunit omega from Streptococcus equi subsp. equi (strain 4047).